The primary structure comprises 274 residues: 2,3,4,5-tetrahydropyridine-2,6-dicarboxylate N-succinyltransferase (274 aa).

Substrate is bound by residues Arg-103 and Asp-140.

It belongs to the transferase hexapeptide repeat family. In terms of assembly, homotrimer.

The protein localises to the cytoplasm. The enzyme catalyses (S)-2,3,4,5-tetrahydrodipicolinate + succinyl-CoA + H2O = (S)-2-succinylamino-6-oxoheptanedioate + CoA. It participates in amino-acid biosynthesis; L-lysine biosynthesis via DAP pathway; LL-2,6-diaminopimelate from (S)-tetrahydrodipicolinate (succinylase route): step 1/3. This is 2,3,4,5-tetrahydropyridine-2,6-dicarboxylate N-succinyltransferase from Haemophilus ducreyi (strain 35000HP / ATCC 700724).